The sequence spans 384 residues: MSCDYFNRGLCQSCRLMSKPVTEQLLEKEARLTHLLGGLPVDERLAPVSGPEFGFRNKAKMVVMGAAHAPVLGIPGPDGQPVDLSHCPLYPQDMQALLLELTSFVRRAGIPPYRVDKAKGELKFILLTRSAVRGEFMLRFVLRSKDAIPRIERELPKLLADFPAIKVVSVNLQPVHMARLEGEEEIFLTQATRLDEVFNGVPLFIRPKSFFQTNPEVASRLYATAAKWVDELSPKSLWDLFCGVGGFGLHCANESLPVTGIEIEAEAIDCAKTSAAAMGLDNLSFAALDSTDFAMGQQAQEVPEVIIVNPPRRGIGEELCERLSAFGPRAIIYSSCNPETLAKDLALISGYRIARVQLFDMFPHSDHFEVLCLLLKEAACASAD.

[4Fe-4S] cluster contacts are provided by Cys3, Cys11, Cys14, and Cys87. Residues Gln212, Phe241, Glu262, and Asn309 each contribute to the S-adenosyl-L-methionine site. The active-site Nucleophile is the Cys336.

The protein belongs to the class I-like SAM-binding methyltransferase superfamily. RNA M5U methyltransferase family. RlmC subfamily.

The catalysed reaction is uridine(747) in 23S rRNA + S-adenosyl-L-methionine = 5-methyluridine(747) in 23S rRNA + S-adenosyl-L-homocysteine + H(+). In terms of biological role, catalyzes the formation of 5-methyl-uridine at position 747 (m5U747) in 23S rRNA. The sequence is that of 23S rRNA (uracil(747)-C(5))-methyltransferase RlmC from Shewanella amazonensis (strain ATCC BAA-1098 / SB2B).